Here is a 494-residue protein sequence, read N- to C-terminus: Hepatic triacylglycerol lipase (494 aa).

The N-terminal stretch at 1–21 (MGNHLQISVSLVLCIFIQSSA) is a signal peptide. A glycan (N-linked (GlcNAc...) asparagine) is linked at Asn79. Ser169 (nucleophile) is an active-site residue. The active-site Charge relay system is the Asp195. The segment at 255 to 278 (CHFLELYKHIAEHGLNAITQTINC) is essential for determining substrate specificity. His280 serves as the catalytic Charge relay system. Residues 353–487 (YHYQFKIQFI…HPTQEKVFVK (135 aa)) form the PLAT domain. The N-linked (GlcNAc...) asparagine glycan is linked to Asn398.

This sequence belongs to the AB hydrolase superfamily. Lipase family. In terms of assembly, homodimer.

The protein resides in the secreted. The enzyme catalyses a triacylglycerol + H2O = a diacylglycerol + a fatty acid + H(+). It carries out the reaction a 1-acyl-sn-glycero-3-phosphocholine + H2O = sn-glycerol 3-phosphocholine + a fatty acid + H(+). It catalyses the reaction a 1,2-diacyl-sn-glycero-3-phosphocholine + H2O = a 2-acyl-sn-glycero-3-phosphocholine + a fatty acid + H(+). The catalysed reaction is 1,2-di-(9Z-octadecenoyl)-sn-glycerol + H2O = 2-(9Z-octadecenoyl)-glycerol + (9Z)-octadecenoate + H(+). The enzyme catalyses 1,2,3-tri-(9Z-octadecenoyl)-glycerol + H2O = 2,3-di-(9Z)-octadecenoyl-sn-glycerol + (9Z)-octadecenoate + H(+). It carries out the reaction 1-(9Z-octadecenoyl)-sn-glycero-3-phospho-L-serine + H2O = sn-glycero-3-phospho-L-serine + (9Z)-octadecenoate + H(+). It catalyses the reaction 1-hexadecanoyl-sn-glycero-3-phosphocholine + H2O = sn-glycerol 3-phosphocholine + hexadecanoate + H(+). The catalysed reaction is 1,3-di-(9Z-octadecenoyl)-glycerol + H2O = 3-(9Z-octadecenoyl)-sn-glycerol + (9Z)-octadecenoate + H(+). The enzyme catalyses 1,2,3-tri-(9Z-octadecenoyl)-glycerol + H2O = di-(9Z)-octadecenoylglycerol + (9Z)-octadecenoate + H(+). It carries out the reaction 1,2-di-(9Z-octadecenoyl)-sn-glycero-3-phosphocholine + H2O = (9Z-octadecenoyl)-sn-glycero-3-phosphocholine + (9Z)-octadecenoate + H(+). It catalyses the reaction 1,2,3-tributanoylglycerol + H2O = dibutanoylglycerol + butanoate + H(+). The catalysed reaction is 1,2-dihexadecanoyl-sn-glycero-3-phosphocholine + H2O = hexadecanoyl-sn-glycero-3-phosphocholine + hexadecanoate + H(+). With respect to regulation, phospholipase A1 and lysophospholipase activities are inhibited by annexin II. Functionally, catalyzes the hydrolysis of triglycerides and phospholipids present in circulating plasma lipoproteins, including chylomicrons, intermediate density lipoproteins (IDL), low density lipoproteins (LDL) of large size and high density lipoproteins (HDL), releasing free fatty acids (FFA) and smaller lipoprotein particles. Also exhibits lysophospholipase activity. Can hydrolyze both neutral lipid and phospholipid substrates but shows a greater binding affinity for neutral lipid substrates than phospholipid substrates. In native LDL, preferentially hydrolyzes the phosphatidylcholine species containing polyunsaturated fatty acids at sn-2 position. The polypeptide is Hepatic triacylglycerol lipase (Lipc) (Rattus norvegicus (Rat)).